The following is a 266-amino-acid chain: rRNA adenine N-6-methyltransferase (266 aa).

S-adenosyl-L-methionine contacts are provided by H14, T16, G41, E62, D87, and N103.

Belongs to the class I-like SAM-binding methyltransferase superfamily. rRNA adenine N(6)-methyltransferase family.

Involved in erythromycin resistance. The protein is rRNA adenine N-6-methyltransferase (ermFU) of Bacteroides fragilis.